Here is a 332-residue protein sequence, read N- to C-terminus: L-lactate dehydrogenase A chain (332 aa).

Residue A2 is modified to N-acetylalanine. An N6-acetyllysine; alternate modification is found at K5. Position 5 is an N6-succinyllysine; alternate (K5). The residue at position 14 (K14) is an N6-acetyllysine. 29 to 57 (GAVGMACAISILMKDLADELALVDVMEDK) contacts NAD(+). An N6-acetyllysine; alternate modification is found at K57. Residue K57 forms a Glycyl lysine isopeptide (Lys-Gly) (interchain with G-Cter in SUMO2); alternate linkage. The residue at position 81 (K81) is an N6-acetyllysine. R99 provides a ligand contact to NAD(+). A substrate-binding site is contributed by R106. K118 carries the post-translational modification N6-acetyllysine; alternate. An N6-succinyllysine; alternate modification is found at K118. N6-acetyllysine is present on K126. NAD(+) is bound at residue N138. The substrate site is built by N138 and R169. Residue H193 is the Proton acceptor of the active site. K224 and K232 each carry N6-acetyllysine. Residue Y239 is modified to Phosphotyrosine. An N6-acetyllysine modification is found at K243. T248 serves as a coordination point for substrate. T309 bears the Phosphothreonine mark. S310 is subject to Phosphoserine. K318 bears the N6-acetyllysine; alternate mark. K318 carries the post-translational modification N6-succinyllysine; alternate. The residue at position 322 (T322) is a Phosphothreonine.

It belongs to the LDH/MDH superfamily. LDH family. As to quaternary structure, homotetramer. Interacts with PTEN upstream reading frame protein MP31. In terms of processing, ISGylated.

It is found in the cytoplasm. It catalyses the reaction (S)-lactate + NAD(+) = pyruvate + NADH + H(+). It participates in fermentation; pyruvate fermentation to lactate; (S)-lactate from pyruvate: step 1/1. Interconverts simultaneously and stereospecifically pyruvate and lactate with concomitant interconversion of NADH and NAD(+). The chain is L-lactate dehydrogenase A chain (LDHA) from Oryctolagus cuniculus (Rabbit).